A 174-amino-acid polypeptide reads, in one-letter code: Large ribosomal subunit protein uL15 (174 aa).

Disordered regions lie at residues 1–57 and 147–174; these read MKLH…QMRI and PWVV…PQKA. The segment covering 21–35 has biased composition (gly residues); that stretch reads RGIGSGKGKTGGKGM.

It belongs to the universal ribosomal protein uL15 family. Part of the 50S ribosomal subunit.

Binds to the 23S rRNA. The protein is Large ribosomal subunit protein uL15 of Roseiflexus sp. (strain RS-1).